The sequence spans 28 residues: Chaperonin GroEL (28 aa).

It belongs to the chaperonin (HSP60) family. Forms a cylinder of 14 subunits composed of two heptameric rings stacked back-to-back. Interacts with the co-chaperonin GroES.

The protein localises to the cytoplasm. It carries out the reaction ATP + H2O + a folded polypeptide = ADP + phosphate + an unfolded polypeptide.. Functionally, together with its co-chaperonin GroES, plays an essential role in assisting protein folding. The GroEL-GroES system forms a nano-cage that allows encapsulation of the non-native substrate proteins and provides a physical environment optimized to promote and accelerate protein folding. In Mycolicibacterium smegmatis (Mycobacterium smegmatis), this protein is Chaperonin GroEL.